We begin with the raw amino-acid sequence, 690 residues long: Glutamate--cysteine ligase (690 aa).

Composition is skewed to low complexity over residues 574–585 (QQQNGHVNNNNN) and 598–619 (NGST…TNGT). Residues 574-620 (QQQNGHVNNNNNNDKKTKNDPIIVNGSTTTTNGTNSGSGITETNGTM) are disordered.

Belongs to the glutamate--cysteine ligase type 3 family.

It carries out the reaction L-cysteine + L-glutamate + ATP = gamma-L-glutamyl-L-cysteine + ADP + phosphate + H(+). It functions in the pathway sulfur metabolism; glutathione biosynthesis; glutathione from L-cysteine and L-glutamate: step 1/2. The chain is Glutamate--cysteine ligase (GCS1) from Candida albicans (Yeast).